A 96-amino-acid chain; its full sequence is NADH-ubiquinone oxidoreductase chain 4L (96 aa).

A run of 3 helical transmembrane segments spans residues 1 to 21 (MNPT…AFYQ), 24 to 44 (LLSL…LMAI), and 57 to 77 (LPLI…VLLV).

It belongs to the complex I subunit 4L family.

It is found in the mitochondrion membrane. It catalyses the reaction a ubiquinone + NADH + 5 H(+)(in) = a ubiquinol + NAD(+) + 4 H(+)(out). Functionally, core subunit of the mitochondrial membrane respiratory chain NADH dehydrogenase (Complex I) which catalyzes electron transfer from NADH through the respiratory chain, using ubiquinone as an electron acceptor. Part of the enzyme membrane arm which is embedded in the lipid bilayer and involved in proton translocation. The polypeptide is NADH-ubiquinone oxidoreductase chain 4L (MT-ND4L) (Myxine glutinosa (Atlantic hagfish)).